A 186-amino-acid polypeptide reads, in one-letter code: Apolipophorin-3 (186 aa).

A signal peptide spans 1–18; that stretch reads MAAKYVFVVAACSALAQA. Positions 19–23 are excised as a propeptide; the sequence is GIVRR.

The protein belongs to the insect apolipophorin-3 family. Equilibrium between a soluble monomer and a bound lipoprotein form. Apolipophorin-3 associates with lipophorin during lipid loading until each particle contains 9 or 14 molecules of apolipophorin-3. In terms of tissue distribution, expressed in hemolymph. Also found in hemocytes and fat body.

Its subcellular location is the secreted. Assists in the loading of diacylglycerol, generated from triacylglycerol stores in the fat body through the action of adipokinetic hormone, into lipophorin, the hemolymph lipoprotein. It increases the lipid carrying capacity of lipophorin by covering the expanding hydrophobic surface resulting from diacylglycerol uptake. It thus plays a critical role in the transport of lipids during flight in several species of insects. Has antibacterial activity against the Gram-positive bacteria L.monocytogenes (MIC=6.5 uM). Lacks antibacterial activity against the Gram-positive bacteria B.circulans, M.luteus, S.aureus, and S.lutea, and the Gram-negative bacteria E.coli D31, E.coli ATCC 25922, and S.typhimurium. Lacks antifungal activity against S.cerevisiae, P.pastoris, Z.marxianus, C.albicans, C.wickerhamii, A.niger, F.oxysporum, and T.harizianum. The protein is Apolipophorin-3 of Galleria mellonella (Greater wax moth).